Reading from the N-terminus, the 312-residue chain is Ribonuclease H2 subunit B (312 aa).

Ala2 is subject to N-acetylalanine. The tract at residues 236-256 is disordered; it reads EPSASLPNPPSKKIKLSDEPV. At Lys295 the chain carries N6-acetyllysine. Ser296 bears the Phosphoserine mark.

It belongs to the RNase H2 subunit B family. The RNase H2 complex is a heterotrimer composed of the catalytic subunit RNASEH2A and the non-catalytic subunits RNASEH2B and RNASEH2C. As to expression, widely expressed.

It localises to the nucleus. Its function is as follows. Non catalytic subunit of RNase H2, an endonuclease that specifically degrades the RNA of RNA:DNA hybrids. Participates in DNA replication, possibly by mediating the removal of lagging-strand Okazaki fragment RNA primers during DNA replication. Mediates the excision of single ribonucleotides from DNA:RNA duplexes. This Homo sapiens (Human) protein is Ribonuclease H2 subunit B (RNASEH2B).